The following is a 780-amino-acid chain: Heat shock protein 90-5, chloroplastic (780 aa).

A chloroplast-targeting transit peptide spans 1–60; it reads MAPALSRSLYTSPLTSVPITPVSSRLSHLRSSFLPHGGALRTGVSCSWNLEKRCNRFAVK. Residues E106, N110, D152, M157, 172 to 173, 196 to 201, T251, and R441 each bind ATP; these read SG and QFGVGF. Positions 742–780 are disordered; sequence GRVEEEEESSTVNEGDDKSGETEVVEPSEVRAESDPWQD. Basic and acidic residues predominate over residues 769-780; the sequence is SEVRAESDPWQD.

It belongs to the heat shock protein 90 family. In terms of assembly, homodimer. Interacts with VIPP1. Interacts with P23-1. As to expression, expressed in roots, cotyledons, young leaves, mature leaves, stems, flowers, petals and siliques.

Its subcellular location is the plastid. It localises to the chloroplast stroma. Functionally, molecular chaperone required for chloroplast biogenesis. Essential for chloroplast biogenesis and maintenance, and thus for embryogenesis. May be involved in the disassembly of VIPP1 for thylakoid membrane formation and/or maintenance. Cooperates with TIC components and other molecular chaperones to drive transport of preproteins into chloroplasts and functions in the chloroplast stroma to facilitate membrane translocation during protein import into the organelle. The chain is Heat shock protein 90-5, chloroplastic from Arabidopsis thaliana (Mouse-ear cress).